The chain runs to 122 residues: T cell receptor gamma variable 9 (122 aa).

The signal sequence occupies residues 1 to 20 (MLSLLHTSTLAVLGALCVYG). The region spanning 27–122 (PQISSTKTLS…ATYYCALWEV (96 aa)) is the Ig-like domain. Residues Cys43 and Cys117 are joined by a disulfide bond.

As to quaternary structure, gamma-delta TR is a heterodimer composed of a gamma and delta chain; disulfide-linked. The gamma-delta TR is associated with the transmembrane signaling CD3 coreceptor proteins following the stoichiometry: a single gamma-delta TR heterodimer associates with one CD3D-CD3E heterodimer, one CD3G-CD3E heterodimer and one CD247 homodimer forming a stable octameric structure. Upon activation, gamma-delta TR complex associates with FCER1G to initiate intracellular signaling.

The protein localises to the cell membrane. Functionally, v region of the variable domain of T cell receptor (TR) gamma chain that participates in the antigen recognition. Gamma-delta TRs recognize a variety of self and foreign non-peptide antigens frequently expressed at the epithelial boundaries between the host and external environment, including endogenous lipids presented by MH-like protein CD1D and phosphoantigens presented by butyrophilin-like molecule BTN3A1. Upon antigen recognition induces rapid, innate-like immune responses involved in pathogen clearance and tissue repair. Binding of gamma-delta TR complex to antigen triggers phosphorylation of immunoreceptor tyrosine-based activation motifs (ITAMs) in the CD3 chains by the LCK and FYN kinases, allowing the recruitment, phosphorylation, and activation of ZAP70 that facilitates phosphorylation of the scaffolding proteins LCP2 and LAT. This lead to the formation of a supramolecular signalosome that recruits the phospholipase PLCG1, resulting in calcium mobilization and ERK activation, ultimately leading to T cell expansion and differentiation into effector cells. Gamma-delta TRs are produced through somatic rearrangement of a limited repertoire of variable (V), diversity (D), and joining (J) genes. The potential diversity of gamma-delta TRs is conferred by the unique ability to rearrange (D) genes in tandem and to utilize all three reading frames. The combinatorial diversity is considerably increased by the sequence exonuclease trimming and random nucleotide (N) region additions which occur during the V-(D)-J rearrangements. This is T cell receptor gamma variable 9 from Homo sapiens (Human).